Consider the following 416-residue polypeptide: E3 ubiquitin-protein ligase DMA1 (416 aa).

Residues 1 to 30 (MSTNTVPSSPPNQTPPAASGIATSHDHTKF) form a disordered region. Glycyl lysine isopeptide (Lys-Gly) (interchain with G-Cter in ubiquitin) cross-links involve residues lysine 150, lysine 204, lysine 217, lysine 237, lysine 240, lysine 260, lysine 300, lysine 306, lysine 313, and lysine 317. The region spanning 189 to 252 (IIIGRYTERV…SGTFLNHQRL (64 aa)) is the FHA domain. The segment at 327–371 (CSICLNKIKPCQAIFISPCAHSWHFHCVRRLVIMNYPQFMCPNCR) adopts an RING-type zinc-finger fold.

The protein belongs to the DMA1 family. As to quaternary structure, interacts with CDC123. Interacts with PCL1. Post-translationally, UBC4-dependent autoubiquitination occurs at Lys-150, Lys-204, Lys-217, Lys-237, Lys-240, Lys-260, Lys-300, Lys-306, Lys-313 and Lys-317. UBC4-dependent autoubiquitination is responsible for DMA2 turnover. UBC13/MMS2-dependent autoubiquitination occurs at Lys-237 and Lys-306. Lys-204 and Lys-306 are also ubiquitinated in trans by DMA2 E3 ligase in association with UBC4.

It is found in the cytoplasm. It carries out the reaction S-ubiquitinyl-[E2 ubiquitin-conjugating enzyme]-L-cysteine + [acceptor protein]-L-lysine = [E2 ubiquitin-conjugating enzyme]-L-cysteine + N(6)-ubiquitinyl-[acceptor protein]-L-lysine.. In terms of biological role, E3 ubiquitin-protein ligase which functions in cell cycle retarding in conjunction with the UBC4 and UBC13/MMS2 complex, 2 E2 ubiquitin conjugating enzymes. Involved in nutritional control of the cell cycle. Targets the G1 cyclin PCL1 for destruction. Required for proper spindle positioning, likely regulating septin ring deposition at the bud neck. This chain is E3 ubiquitin-protein ligase DMA1, found in Saccharomyces cerevisiae (strain ATCC 204508 / S288c) (Baker's yeast).